Consider the following 516-residue polypeptide: BAR/IMD domain-containing adapter protein 2-like 2 (516 aa).

Residues 1–227 enclose the IMD domain; the sequence is MSGVNSDLLH…PTPLDQEAQL (227 aa). Residues 200 to 273 are disordered; that stretch reads ADGWKEKVSE…SSSVGESLGL (74 aa). Residues 201-212 are compositionally biased toward basic and acidic residues; sequence DGWKEKVSESRS. Residues 226–236 are compositionally biased toward polar residues; that stretch reads QLKSSVGSLLQ. The span at 238–247 shows a compositional bias: basic and acidic residues; it reads GDREMDREPL. Over residues 249 to 270 the composition is skewed to low complexity; it reads RVPSRAPSPLPSRSRSSSVGES. The region spanning 274–337 is the SH3 domain; sequence GGGRSMRAIV…PAAYVASTED (64 aa). Polar residues predominate over residues 355-376; it reads LLEPTSQSESDTQTYSEVSSPV. The tract at residues 355–516 is disordered; sequence LLEPTSQSES…TNDRSAPRIQ (162 aa). Over residues 434–450 the composition is skewed to basic and acidic residues; sequence PDRRAESHFESKVELKN. The span at 454-465 shows a compositional bias: pro residues; the sequence is LPPPAPPLPNSP.

It is found in the cell membrane. Its function is as follows. Phosphoinositides-binding protein that induces the formation of planar or gently curved membrane structures. In Danio rerio (Zebrafish), this protein is BAR/IMD domain-containing adapter protein 2-like 2 (baiap2l2).